The following is a 185-amino-acid chain: Cuticle protein 18.6, isoform B (185 aa).

A run of 6 repeats spans residues 21–24, 33–36, 41–44, 133–136, 139–142, and 150–153. Residues 64-134 form the Chitin-binding type R&amp;R domain; sequence HPQYSFAYNV…KEAGAHPAAA (71 aa).

Its function is as follows. Component of the cuticle of migratory locust which contains more than 100 different structural proteins. This is Cuticle protein 18.6, isoform B from Locusta migratoria (Migratory locust).